The following is an 895-amino-acid chain: MSTGIRRRHADEKKNILEKESLQNDETQREMEKDISLLRPAHWNFIGLFFLVLIIGTTFLHKCLPEPKDPNQEETQFSEKRAVKVLQELSDYGWKPAGSYNCEELTRNRILKELNDIRSQNQNVENLRFDIDTQYVSGCFDIPAHDTEGMNICYRNVSNVMARLGKGEKKDKISVLLNCHYDSWPTSNAGSDDLSSCALMLELIRLYSKNPHLLNHDVIFLFNGAEESSLLAAHGFITQHSWRHEIRAFINLEASGSGGRELLFQAGPANQWLLNSYLEAAIHPHCSVIGQEVFQSGVYPGDTDFRIFRDHGRVPGLDLAFVQNGYWWHTEFDTAERITKGSLQRAGENVYSTLNHLLKSPYLEKPAEYADRKTVFFDFLGLFVIIYPLSIAHLVNMLTICTVIALMSHRFYSKTFITFLALRDYVLTILTIALVLKAMTFMSLFTYGALRWYTRHWLALVAYGLPSVWAGISVQGLLTARLAPKAREEYGSTLELIHLTLISGILLAFTYYDIASGFLFALLLVPAIKSIITYFGAWPTCPTFNTILTLILSFPGCAMAIYTTEMLLSIFIPIMGRSSYNPEPAVSFFVAFSAGCIVLSLGGLVAKSRNSRSSNEAGLLELIYNILGVLLVTLTILYVFSSFWPSPYRFDNVYPTAKRTQFFHVNQMLYDRNGQISVNDTRFYAISHDYRGAEDIPFVKKDPEYTGLQCHYENNPWCETPFLFPTKGRLNERNIRVRSVDERLKFKHPVKILGISKRHGVDSKDGKGNIEYSFSVIGTGQISVYIIPDTTWLITNTSVTQPKTPQENMFLYYTCSTPNNICEWMFKVTIKKTTQTPSDDKPLLIGISSHYLHGPEMQSESIKNMIAKIQENRVNSPEWTVTASAWNVDQVYKYF.

The tract at residues 1 to 27 is disordered; sequence MSTGIRRRHADEKKNILEKESLQNDET. The Cytoplasmic portion of the chain corresponds to 1–39; it reads MSTGIRRRHADEKKNILEKESLQNDETQREMEKDISLLR. The segment covering 9–27 has biased composition (basic and acidic residues); that stretch reads HADEKKNILEKESLQNDET. Residues 40–60 traverse the membrane as a helical segment; that stretch reads PAHWNFIGLFFLVLIIGTTFL. Topologically, residues 61-374 are lumenal; it reads HKCLPEPKDP…KPAEYADRKT (314 aa). N156 is a glycosylation site (N-linked (GlcNAc...) asparagine). Residues H180 and D192 each contribute to the Zn(2+) site. E226 serves as the catalytic Proton acceptor. Residues E227, E253, and H329 each coordinate Zn(2+). Residues 375–395 form a helical membrane-spanning segment; it reads VFFDFLGLFVIIYPLSIAHLV. Residues 396–424 are Cytoplasmic-facing; it reads NMLTICTVIALMSHRFYSKTFITFLALRD. Residues 425-445 form a helical membrane-spanning segment; it reads YVLTILTIALVLKAMTFMSLF. Over 446-457 the chain is Lumenal; it reads TYGALRWYTRHW. A helical membrane pass occupies residues 458-478; it reads LALVAYGLPSVWAGISVQGLL. Over 479-489 the chain is Cytoplasmic; the sequence is TARLAPKAREE. A helical membrane pass occupies residues 490–512; sequence YGSTLELIHLTLISGILLAFTYY. The Lumenal segment spans residues 513–515; the sequence is DIA. Residues 516-538 form a helical membrane-spanning segment; that stretch reads SGFLFALLLVPAIKSIITYFGAW. At 539–553 the chain is on the cytoplasmic side; sequence PTCPTFNTILTLILS. Residues 554–574 form a helical membrane-spanning segment; that stretch reads FPGCAMAIYTTEMLLSIFIPI. At 575–584 the chain is on the lumenal side; it reads MGRSSYNPEP. The chain crosses the membrane as a helical span at residues 585 to 605; it reads AVSFFVAFSAGCIVLSLGGLV. Residues 606 to 619 are Cytoplasmic-facing; it reads AKSRNSRSSNEAGL. A helical membrane pass occupies residues 620 to 640; that stretch reads LELIYNILGVLLVTLTILYVF. The Lumenal segment spans residues 641–895; sequence SSFWPSPYRF…WNVDQVYKYF (255 aa). N-linked (GlcNAc...) asparagine glycosylation is found at N679 and N796.

Belongs to the peptidase M28 family. Zn(2+) serves as cofactor.

Its subcellular location is the endoplasmic reticulum membrane. The sequence is that of Putative endoplasmic reticulum metallopeptidase 1-B from Caenorhabditis elegans.